Consider the following 245-residue polypeptide: Proteolipid protein DM alpha (245 aa).

Helical transmembrane passes span 19–35, 71–87, 117–133, and 204–220; these read LIAT…FCGC, IIYG…VLLL, FIFL…GVFA, and LFIA…IALL.

Belongs to the myelin proteolipid protein family. In terms of tissue distribution, highly expressed in white matter in myelinating shark brain.

The protein resides in the membrane. The sequence is that of Proteolipid protein DM alpha from Squalus acanthias (Spiny dogfish).